The following is a 631-amino-acid chain: MILKEQETLGFQSEVKQLLNLMIHSLYSNKEIFLRELISNASDAADKLRFLALAKPDLYEGNGELYVRIICNKEKRTITIIDNGIGMCRTEVIDNLGTIAKSGTKAFLETIDVKNSKNNQLIGQFGVGFYSAFIVAQKVIVRTRAAGASADEGVHWESTGEGDYIIAAINKPERGTEITLFLREGEDEFLDDWRIKNTIGKYSDHITLPIEIATNSENKNNNIITWEQINKAQALWTRNKVDVSDQEYKDFYKHLYHDSNDPISWSHNRVEGQQEYTSLLYIPASASWGIWNRDHKYGLKLYIKRVLIMDHADYFLPNYLRFVKGIIDCNDLPLNISREMLQHNRITQNLKNAITKRILSMLEKLATQNNEQYQNFWQHFGLVIKEGLAEDPNNSKSIARLLRFSTTHSKSMEQNVSLDEYVSRIAEQQEKIYYIIADSYAAANSSPHLELLQKKGIEVLLLHERIDAWMMNYLIEFNGKSFQLVSKADLKLDKFLNENTTEQKDMTKAFEPFIERVKKYLGDRIKEVRLTYSLTDTPAIVTIDSNNMTTHMAKLIVASGQNKPDIKYIFELNPLHPIVKKVSNTDNDIYFSEVIELLLDQALLVECGTLENPNQFVRRINKLLNHDTIVN.

The segment at 1-338 is a; substrate-binding; it reads MILKEQETLG…CNDLPLNISR (338 aa). A b region spans residues 339-554; the sequence is EMLQHNRITQ…SNNMTTHMAK (216 aa). A c region spans residues 555–631; it reads LIVASGQNKP…KLLNHDTIVN (77 aa).

Belongs to the heat shock protein 90 family. As to quaternary structure, homodimer.

It localises to the cytoplasm. Molecular chaperone. Has ATPase activity. The chain is Chaperone protein HtpG from Baumannia cicadellinicola subsp. Homalodisca coagulata.